A 302-amino-acid chain; its full sequence is Small ribosomal subunit biogenesis GTPase RsgA (302 aa).

The 161-residue stretch at K69 to V229 folds into the CP-type G domain. GTP contacts are provided by residues N118 to D121 and G172 to S180. Zn(2+)-binding residues include C252, C257, H259, and C265.

This sequence belongs to the TRAFAC class YlqF/YawG GTPase family. RsgA subfamily. Monomer. Associates with 30S ribosomal subunit, binds 16S rRNA. Zn(2+) is required as a cofactor.

The protein resides in the cytoplasm. Functionally, one of several proteins that assist in the late maturation steps of the functional core of the 30S ribosomal subunit. Helps release RbfA from mature subunits. May play a role in the assembly of ribosomal proteins into the subunit. Circularly permuted GTPase that catalyzes slow GTP hydrolysis, GTPase activity is stimulated by the 30S ribosomal subunit. The sequence is that of Small ribosomal subunit biogenesis GTPase RsgA from Aquifex aeolicus (strain VF5).